The sequence spans 450 residues: ATP-dependent protease ATPase subunit HslU (450 aa).

ATP is bound by residues Val29, 71–76, Asp261, Glu328, and Arg400; that span reads GVGKTE.

Belongs to the ClpX chaperone family. HslU subfamily. As to quaternary structure, a double ring-shaped homohexamer of HslV is capped on each side by a ring-shaped HslU homohexamer. The assembly of the HslU/HslV complex is dependent on binding of ATP.

It is found in the cytoplasm. Its function is as follows. ATPase subunit of a proteasome-like degradation complex; this subunit has chaperone activity. The binding of ATP and its subsequent hydrolysis by HslU are essential for unfolding of protein substrates subsequently hydrolyzed by HslV. HslU recognizes the N-terminal part of its protein substrates and unfolds these before they are guided to HslV for hydrolysis. The protein is ATP-dependent protease ATPase subunit HslU of Rickettsia canadensis (strain McKiel).